Consider the following 197-residue polypeptide: Class A basic helix-loop-helix protein 15 (197 aa).

Over residues 1 to 12 (MKTKNRPPRRRT) the composition is skewed to basic residues. 2 disordered regions span residues 1 to 82 (MKTK…ERER) and 175 to 197 (TEDQPQGHLQRYSTQIHSFREGS). Thr12 and Thr25 each carry phosphothreonine. The segment covering 27–36 (DRSQSGSGAS) has biased composition (polar residues). Residues 65–82 (SRRENSVQRRLESNERER) are compositionally biased toward basic and acidic residues. The region spanning 72–124 (QRRLESNERERQRMHKLNNAFQALREVIPHVRADKKLSKIETLTLAKNYIKSL) is the bHLH domain.

As to quaternary structure, forms homodimers or heterodimers with TCF3 gene products E12 and E47. These dimers bind to the E-box site, however, heterodimer with MYOD1 does not bind target DNA. Expressed in liver, spleen and olfactory epithelium. Weaker expression is seen in skeletal muscle, cardiac muscle, eye and brain tissue.

The protein localises to the nucleus. Its function is as follows. Plays a role in controlling the transcriptional activity of MyoD, ensuring that expanding myoblast populations remain undifferentiated. Repression may occur through muscle-specific E-box occupancy by homodimers. May also negatively regulate bHLH-mediated transcription through an N-terminal repressor domain. Serves as a key regulator of acinar cell function, stability, and identity. Also required for normal organelle localization in exocrine cells and for mitochondrial calcium ion transport. May function as a unique regulator of gene expression in several different embryonic and postnatal cell lineages. Binds to the E-box consensus sequence 5'-CANNTG-3'. The protein is Class A basic helix-loop-helix protein 15 (Bhlha15) of Rattus norvegicus (Rat).